Consider the following 333-residue polypeptide: DNA-directed RNA polymerase subunit alpha (333 aa).

Residues 1–246 (MKKMVQIKYK…AHLQVIGDVK (246 aa)) form an alpha N-terminal domain (alpha-NTD) region. Positions 262 to 333 (VEPSIHSVDI…YNVTLNRGEK (72 aa)) are alpha C-terminal domain (alpha-CTD).

Belongs to the RNA polymerase alpha chain family. As to quaternary structure, homodimer. The RNAP catalytic core consists of 2 alpha, 1 beta, 1 beta' and 1 omega subunit. When a sigma factor is associated with the core the holoenzyme is formed, which can initiate transcription.

The catalysed reaction is RNA(n) + a ribonucleoside 5'-triphosphate = RNA(n+1) + diphosphate. Its function is as follows. DNA-dependent RNA polymerase catalyzes the transcription of DNA into RNA using the four ribonucleoside triphosphates as substrates. This Mycoplasmopsis pulmonis (strain UAB CTIP) (Mycoplasma pulmonis) protein is DNA-directed RNA polymerase subunit alpha.